Consider the following 67-residue polypeptide: Mu-conotoxin TsIIIA (67 aa).

The first 20 residues, 1–20 (MMSKLGVLLTICLLLFPLTA), serve as a signal peptide directing secretion. The propeptide occupies 21-48 (VPLDGDQPADQPAERKQNEQHPLFDQKR). Intrachain disulfides connect cysteine 50/cysteine 59, cysteine 51/cysteine 64, and cysteine 55/cysteine 65.

This sequence belongs to the conotoxin M superfamily. In terms of tissue distribution, expressed by the venom duct.

The protein localises to the secreted. In terms of biological role, mu-conotoxins block voltage-gated sodium channels (Nav). This toxin specifically inhibits mammalian Nav1.8/SCN10A sodium currents (IC(50)=2.11 uM) without inducing a shift in the current-voltage relationship of this channel. In vivo, shows potent analgesic activity in a mice hotplate analgesic assay. In addition, this toxin has better analgesic effects than Ziconotide, an analgesic drug. This chain is Mu-conotoxin TsIIIA, found in Conus tessulatus (Tessellate cone).